We begin with the raw amino-acid sequence, 123 residues long: Small ribosomal subunit protein uS11 (123 aa).

It belongs to the universal ribosomal protein uS11 family. Part of the 30S ribosomal subunit. Interacts with proteins S7 and S18. Binds to IF-3.

Functionally, located on the platform of the 30S subunit, it bridges several disparate RNA helices of the 16S rRNA. Forms part of the Shine-Dalgarno cleft in the 70S ribosome. This is Small ribosomal subunit protein uS11 from Coxiella burnetii (strain RSA 331 / Henzerling II).